A 101-amino-acid chain; its full sequence is MAKKSMIEREKKRQRLVEKYREKRQQLKAAMADPNIDQATRMELHAQLQKLPRASSPTRLRNRCWKTGRPRGYFRDFGLCRNSLREMAHRGLLPGVVKSSW.

The protein belongs to the universal ribosomal protein uS14 family. As to quaternary structure, part of the 30S ribosomal subunit. Contacts proteins S3 and S10.

In terms of biological role, binds 16S rRNA, required for the assembly of 30S particles and may also be responsible for determining the conformation of the 16S rRNA at the A site. The sequence is that of Small ribosomal subunit protein uS14 from Synechococcus sp. (strain JA-2-3B'a(2-13)) (Cyanobacteria bacterium Yellowstone B-Prime).